We begin with the raw amino-acid sequence, 354 residues long: Rhodopsin (354 aa).

Topologically, residues 1-36 (MNGTEGPNFYVPFSNKSGVVRSPFEYPQYYLAEPWQ) are extracellular. Residues asparagine 2 and asparagine 15 are each glycosylated (N-linked (GlcNAc...) asparagine). A helical membrane pass occupies residues 37 to 61 (YSVLAAYMFLLILLGFPVNFLTLYV). The Cytoplasmic portion of the chain corresponds to 62–73 (TIQHKKLRTPLN). A helical transmembrane segment spans residues 74–96 (YILLNLAFANHFMVFGGFPVTMY). The Extracellular segment spans residues 97-110 (SSMHGYFVFGQTGC). A disulfide bridge connects residues cysteine 110 and cysteine 187. Residues 111–133 (YIEGFFATMGGEIALWSLVVLAI) form a helical membrane-spanning segment. Positions 134-136 (ERY) match the 'Ionic lock' involved in activated form stabilization motif. Over 134–152 (ERYVVVCKPMSNFRFGENH) the chain is Cytoplasmic. Residues 153–173 (AIMGVMMTWIMALACAAPPLF) traverse the membrane as a helical segment. The Extracellular segment spans residues 174–202 (GWSRYIPEGMQCSCGVDYYTLKPEVNNES). The chain crosses the membrane as a helical span at residues 203-224 (FVIYMFLVHFTIPLMIIFFCYG). Residues 225–252 (RLVCTVKEAAAQQQESATTQKAEKEVTR) are Cytoplasmic-facing. The helical transmembrane segment at 253 to 274 (MVIIMVVAFLICWVPYASVAFY) threads the bilayer. The Extracellular portion of the chain corresponds to 275 to 286 (IFSNQGTDFGPI). Residues 287–308 (FMTVPAFFAKSSAIYNPVIYIV) traverse the membrane as a helical segment. Position 296 is an N6-(retinylidene)lysine (lysine 296). Topologically, residues 309 to 354 (LNKQFRNCMITTICCGKNPFGDDETTSAATSKTEASSVSSSQVSPA) are cytoplasmic. S-palmitoyl cysteine attachment occurs at residues cysteine 322 and cysteine 323. The interval 332-354 (ETTSAATSKTEASSVSSSQVSPA) is disordered. Residues 334-354 (TSAATSKTEASSVSSSQVSPA) are compositionally biased toward low complexity.

The protein belongs to the G-protein coupled receptor 1 family. Opsin subfamily. Post-translationally, contains one covalently linked retinal chromophore. Upon light absorption, the covalently bound 11-cis-retinal is converted to all-trans-retinal. After hydrolysis of the Schiff base and release of the covalently bound all-trans-retinal, active rhodopsin is regenerated by binding of a fresh molecule of 11-cis-retinal.

It localises to the membrane. Its subcellular location is the cell projection. It is found in the cilium. The protein resides in the photoreceptor outer segment. Functionally, photoreceptor required for image-forming vision at low light intensity. Required for photoreceptor cell viability after birth. Light-induced isomerization of 11-cis to all-trans retinal triggers a conformational change that activates signaling via G-proteins. Subsequent receptor phosphorylation mediates displacement of the bound G-protein alpha subunit by arrestin and terminates signaling. The chain is Rhodopsin (RHO) from Ambystoma tigrinum (Eastern tiger salamander).